We begin with the raw amino-acid sequence, 201 residues long: Large ribosomal subunit protein uL4 (201 aa).

Residues 43–69 (TKAQKTRSEVAGGGKKPWRQKGTGRAR) are disordered.

This sequence belongs to the universal ribosomal protein uL4 family. In terms of assembly, part of the 50S ribosomal subunit.

One of the primary rRNA binding proteins, this protein initially binds near the 5'-end of the 23S rRNA. It is important during the early stages of 50S assembly. It makes multiple contacts with different domains of the 23S rRNA in the assembled 50S subunit and ribosome. In terms of biological role, forms part of the polypeptide exit tunnel. This chain is Large ribosomal subunit protein uL4, found in Idiomarina loihiensis (strain ATCC BAA-735 / DSM 15497 / L2-TR).